Reading from the N-terminus, the 192-residue chain is Transmembrane protein 276 (192 aa).

Positions Met1–Ser32 are cleaved as a signal peptide. 4 helical membrane-spanning segments follow: residues Gly35–Leu55, Ala63–Val83, Leu92–Cys112, and Val114–Thr134.

Its subcellular location is the membrane. In Rattus norvegicus (Rat), this protein is Transmembrane protein 276.